The primary structure comprises 194 residues: Probable GTP-binding protein EngB (194 aa).

One can recognise an EngB-type G domain in the interval 22 to 194; that stretch reads DLPEYALAGR…AWQFIKEGME (173 aa). Residues 30-37, 57-61, 75-78, 142-145, and 174-176 contribute to the GTP site; these read GRSNVGKS, GKTQT, DVPG, TKAD, and FSS. Mg(2+)-binding residues include S37 and T59.

This sequence belongs to the TRAFAC class TrmE-Era-EngA-EngB-Septin-like GTPase superfamily. EngB GTPase family. The cofactor is Mg(2+).

Necessary for normal cell division and for the maintenance of normal septation. In Listeria monocytogenes serovar 1/2a (strain ATCC BAA-679 / EGD-e), this protein is Probable GTP-binding protein EngB.